The chain runs to 921 residues: Leucine--tRNA ligase (921 aa).

Residues 41–52 (PYPSGSGLHVGH) carry the 'HIGH' region motif. A 'KMSKS' region motif is present at residues 695–699 (KMSKS). Lys-698 is a binding site for ATP.

It belongs to the class-I aminoacyl-tRNA synthetase family.

It localises to the cytoplasm. The catalysed reaction is tRNA(Leu) + L-leucine + ATP = L-leucyl-tRNA(Leu) + AMP + diphosphate. The sequence is that of Leucine--tRNA ligase from Cytophaga hutchinsonii (strain ATCC 33406 / DSM 1761 / CIP 103989 / NBRC 15051 / NCIMB 9469 / D465).